The primary structure comprises 471 residues: Ribulose bisphosphate carboxylase large chain 2 (471 aa).

The substrate site is built by asparagine 116 and threonine 166. The active-site Proton acceptor is the lysine 168. Lysine 170 contacts substrate. Residues lysine 194, aspartate 196, and glutamate 197 each contribute to the Mg(2+) site. Lysine 194 is modified (N6-carboxylysine). The active-site Proton acceptor is the histidine 287. Residues arginine 288, histidine 320, and serine 372 each coordinate substrate.

Belongs to the RuBisCO large chain family. Type I subfamily. In terms of assembly, heterohexadecamer of 8 large chains and 8 small chains. Requires Mg(2+) as cofactor.

It is found in the carboxysome. The catalysed reaction is 2 (2R)-3-phosphoglycerate + 2 H(+) = D-ribulose 1,5-bisphosphate + CO2 + H2O. The enzyme catalyses D-ribulose 1,5-bisphosphate + O2 = 2-phosphoglycolate + (2R)-3-phosphoglycerate + 2 H(+). Functionally, ruBisCO catalyzes two reactions: the carboxylation of D-ribulose 1,5-bisphosphate, the primary event in carbon dioxide fixation, as well as the oxidative fragmentation of the pentose substrate. Both reactions occur simultaneously and in competition at the same active site. In Hydrogenovibrio marinus, this protein is Ribulose bisphosphate carboxylase large chain 2.